Reading from the N-terminus, the 365-residue chain is Membrane cofactor protein (365 aa).

Positions 1–44 (MTAAPLMPDSTHPCRRRKSYTFFWCSLGVYAEALLFLLSHLSDA) are cleaved as a signal peptide. Sushi domains lie at 45–106 (CELP…GCIK), 107–170 (VQCT…HCEK), 171–236 (IYCL…ECKV), and 237–296 (VKCP…KCLK). The Extracellular segment spans residues 45–329 (CELPRPFEAM…GIFSQELDAW (285 aa)). Cystine bridges form between Cys-109/Cys-151, Cys-137/Cys-168, Cys-173/Cys-221, Cys-202/Cys-234, Cys-239/Cys-281, and Cys-267/Cys-294. Residue Asn-181 is glycosylated (N-linked (GlcNAc...) asparagine). A glycan (O-linked (GalNAc...) threonine) is linked at Thr-205. Thr-301 and Thr-304 each carry an O-linked (GalNAc...) threonine glycan. N-linked (GlcNAc...) asparagine glycosylation is present at Asn-310. Residue Thr-312 is glycosylated (O-linked (GalNAc...) threonine). A helical transmembrane segment spans residues 330 to 350 (IIALIVITSIVGVFILCLIVL). The Cytoplasmic portion of the chain corresponds to 351–365 (RCFEHRKKTNVSAAR).

In terms of assembly, interacts with C3b. Interacts with C4b. Interacts with moesin/MSN. Post-translationally, may be O-glycosylated. N-glycosylated. Present only in testis (at protein level).

The protein resides in the cytoplasmic vesicle. It localises to the secretory vesicle. Its subcellular location is the acrosome inner membrane. It is found in the secreted. In terms of biological role, may be involved in the fusion of the spermatozoa with the oocyte during fertilization. The sequence is that of Membrane cofactor protein (Cd46) from Mus musculus (Mouse).